A 544-amino-acid polypeptide reads, in one-letter code: Exodeoxyribonuclease 7 large subunit (544 aa).

Residues 522 to 544 form a disordered region; sequence PETPPKSRKADNPPEPPEQTSFL.

The protein belongs to the XseA family. In terms of assembly, heterooligomer composed of large and small subunits.

It is found in the cytoplasm. The catalysed reaction is Exonucleolytic cleavage in either 5'- to 3'- or 3'- to 5'-direction to yield nucleoside 5'-phosphates.. In terms of biological role, bidirectionally degrades single-stranded DNA into large acid-insoluble oligonucleotides, which are then degraded further into small acid-soluble oligonucleotides. This is Exodeoxyribonuclease 7 large subunit from Zymomonas mobilis subsp. mobilis (strain ATCC 31821 / ZM4 / CP4).